The primary structure comprises 376 residues: Alanine racemase (376 aa).

Catalysis depends on lysine 40, which acts as the Proton acceptor; specific for D-alanine. The residue at position 40 (lysine 40) is an N6-(pyridoxal phosphate)lysine. Arginine 138 provides a ligand contact to substrate. Tyrosine 270 (proton acceptor; specific for L-alanine) is an active-site residue. Methionine 317 is a binding site for substrate.

The protein belongs to the alanine racemase family. It depends on pyridoxal 5'-phosphate as a cofactor.

It catalyses the reaction L-alanine = D-alanine. The protein operates within amino-acid biosynthesis; D-alanine biosynthesis; D-alanine from L-alanine: step 1/1. Functionally, catalyzes the interconversion of L-alanine and D-alanine. May also act on other amino acids. This is Alanine racemase (alr) from Lactobacillus gasseri (strain ATCC 33323 / DSM 20243 / BCRC 14619 / CIP 102991 / JCM 1131 / KCTC 3163 / NCIMB 11718 / NCTC 13722 / AM63).